Consider the following 202-residue polypeptide: uncharacterized protein (202 aa).

Belongs to the dienelactone hydrolase family.

This is an uncharacterized protein from Bacillus subtilis (strain 168).